A 234-amino-acid polypeptide reads, in one-letter code: Sugar fermentation stimulation protein A (234 aa).

A DNA-binding region (H-T-H motif) is located at residues 201 to 220 (LLTEAQQRGVEILAYKAEIS).

Belongs to the SfsA family.

Functionally, binds to DNA non-specifically. Could be a regulatory factor involved in maltose metabolism. The sequence is that of Sugar fermentation stimulation protein A from Escherichia fergusonii (strain ATCC 35469 / DSM 13698 / CCUG 18766 / IAM 14443 / JCM 21226 / LMG 7866 / NBRC 102419 / NCTC 12128 / CDC 0568-73).